The following is a 53-amino-acid chain: Lupus La protein homolog (53 aa).

Residues 1-13 (GKVEFQGKKTKFD) show a composition bias toward basic and acidic residues. Residues 1-53 (GKVEFQGKKTKFDSDDERNENGAAGPVKRAREETDKEEPASKQQKTENGAGDQ) are disordered. An N6-acetyllysine modification is found at Lys8. Thr10 bears the Phosphothreonine mark. Ser14 carries the post-translational modification Phosphoserine. The segment covering 29 to 40 (RAREETDKEEPA) has biased composition (basic and acidic residues).

As to quaternary structure, interacts with DDX15. May interact with RUFY1. In terms of processing, phosphorylated.

It is found in the nucleus. In terms of biological role, binds to the 3' poly(U) terminus of nascent RNA polymerase III transcripts, protecting them from exonuclease digestion and facilitating their folding and maturation. The polypeptide is Lupus La protein homolog (SSB) (Oryctolagus cuniculus (Rabbit)).